The primary structure comprises 378 residues: Sphingosine 1-phosphate receptor 3 (378 aa).

Residues 1-40 lie on the Extracellular side of the membrane; sequence MATALPPRLQPVRGNETLREHYQYVGKLAGRLKEASEGST. The N-linked (GlcNAc...) asparagine glycan is linked to Asn15. Residues 41-65 traverse the membrane as a helical segment; the sequence is LTTVLFLVICSFIVLENLMVLIAIW. The Cytoplasmic segment spans residues 66 to 72; sequence KNNKFHN. The chain crosses the membrane as a helical span at residues 73–101; the sequence is RMYFFIGNLALCDLLAGIAYKVNILMSGK. Over 102–115 the chain is Extracellular; it reads KTFSLSPTVWFLRE. The helical transmembrane segment at 116 to 134 threads the bilayer; that stretch reads GSMFVALGASTCSLLAIAI. The Cytoplasmic segment spans residues 135–153; sequence ERHLTMIKMRPYDANKRHR. The chain crosses the membrane as a helical span at residues 154-179; that stretch reads VFLLIGMCWLIAFTLGALPILGWNCL. Residues 180 to 195 are Extracellular-facing; sequence HNLPDCSTILPLYSKK. A helical membrane pass occupies residues 196-216; the sequence is YIAFCISIFTAILVTIVILYA. Over 217 to 243 the chain is Cytoplasmic; it reads RIYFLVKSSSRKVANHNNSERSMALLR. The helical transmembrane segment at 244–265 threads the bilayer; the sequence is TVVIVVSVFIACWSPLFILFLI. Topologically, residues 266–281 are extracellular; that stretch reads DVACRVQACPILFKAQ. Residues 282 to 302 form a helical membrane-spanning segment; it reads WFIVLAVLNSAMNPVIYTLAS. Topologically, residues 303 to 378 are cytoplasmic; the sequence is KEMRRAFFRL…AALQNGIFCN (76 aa). A Phosphoserine modification is found at Ser326. The interval 327 to 357 is disordered; sequence PIQPALDPSRSKSSSSNNSSHSPKVKEDLPH. The span at 337–348 shows a compositional bias: low complexity; the sequence is SKSSSSNNSSHS.

Belongs to the G-protein coupled receptor 1 family. In terms of tissue distribution, expressed in all tissues, but most abundantly in heart, placenta, kidney, and liver.

The protein localises to the cell membrane. Functionally, receptor for the lysosphingolipid sphingosine 1-phosphate (S1P). S1P is a bioactive lysophospholipid that elicits diverse physiological effect on most types of cells and tissues. When expressed in rat HTC4 hepatoma cells, is capable of mediating S1P-induced cell proliferation and suppression of apoptosis. This Homo sapiens (Human) protein is Sphingosine 1-phosphate receptor 3.